The chain runs to 103 residues: Large ribosomal subunit protein uL24 (103 aa).

Belongs to the universal ribosomal protein uL24 family. Part of the 50S ribosomal subunit.

In terms of biological role, one of two assembly initiator proteins, it binds directly to the 5'-end of the 23S rRNA, where it nucleates assembly of the 50S subunit. One of the proteins that surrounds the polypeptide exit tunnel on the outside of the subunit. This Latilactobacillus sakei subsp. sakei (strain 23K) (Lactobacillus sakei subsp. sakei) protein is Large ribosomal subunit protein uL24.